The following is a 105-amino-acid chain: MDKKEIFDALDDFSQNLLTTLAEVDAIKKHLQGVIDENTTLRLENSKLRERLEKEDKTGHKSSNFGKENLENIYEDGFHICTFSYGQRRDNDEPCMFCVELLNRD.

Zn(2+) contacts are provided by H79, C81, C95, and C98.

The protein belongs to the YabA family. Homotetramer. Interacts with both DnaA and DnaN, acting as a bridge between these two proteins. The cofactor is Zn(2+).

The protein localises to the cytoplasm. Its subcellular location is the nucleoid. In terms of biological role, involved in control of chromosome replication initiation. Inhibits the cooperative binding of DnaA to the oriC region, thus negatively regulating initiation of chromosome replication. Inhibits the ability of DnaA-ATP to form a helix on DNA; does not disassemble preformed DnaA-DNA helices. Decreases the residence time of DnaA on the chromosome at its binding sites (oriC, replication forks and promoter-binding sites). Tethers DnaA to the replication machinery via the DNA polymerase beta sliding clamp subunit (dnaN). Associates with oriC and other DnaA targets on the chromosome in a DnaA-dependent manner. This is Replication initiation control protein YabA from Streptococcus suis (strain 98HAH33).